The following is a 573-amino-acid chain: Probable D-xylulose kinase A (573 aa).

Substrate contacts are provided by His-100, Arg-171, Asp-287, and Asn-288. ATP is bound by residues Trp-368, 473-474, and Asn-477; that span reads GG.

Belongs to the FGGY kinase family.

The protein resides in the cytoplasm. It carries out the reaction D-xylulose + ATP = D-xylulose 5-phosphate + ADP + H(+). Its function is as follows. Highly specific D-xylulose kinase which participates in the catabolism of xylose. Xylose is a major component of hemicelluloses such as xylan. Most fungi utilize D-xylose via three enzymatic reactions, xylose reductase (XR), xylitol dehydrogenase (XDH), and xylulokinase, to form xylulose 5-phosphate, which enters pentose phosphate pathway. The protein is Probable D-xylulose kinase A (xkiA) of Aspergillus terreus (strain NIH 2624 / FGSC A1156).